We begin with the raw amino-acid sequence, 213 residues long: MRLPLFDDIGERSLWTFENLVSRNGFHAVAGVDEAGRGPLAGPVVAAAVILPQGAELPGVDDSKKLSAPKREHLFGLISGCALAVGVGVADHACIDRINILQATLRAMAEAVGQLAVPPDYLLIDGISTIPLNLPQKTIKKGDSSSISIASASIVAKVTRDRMMMEYDQQFPGYGFAEHKGYGCASHLAAIAELGPCPIHRKTFRGVKEHVAP.

The RNase H type-2 domain occupies His27–Pro213. Residues Asp33, Glu34, and Asp125 each contribute to the a divalent metal cation site.

The protein belongs to the RNase HII family. The cofactor is Mn(2+). Mg(2+) serves as cofactor.

The protein resides in the cytoplasm. It carries out the reaction Endonucleolytic cleavage to 5'-phosphomonoester.. Its function is as follows. Endonuclease that specifically degrades the RNA of RNA-DNA hybrids. This chain is Ribonuclease HII, found in Geobacter metallireducens (strain ATCC 53774 / DSM 7210 / GS-15).